Consider the following 493-residue polypeptide: 3-octaprenyl-4-hydroxybenzoate carboxy-lyase (493 aa).

A Mn(2+)-binding site is contributed by asparagine 172. Residues isoleucine 175 to arginine 177, arginine 189 to leucine 191, and arginine 194 to glycine 195 each bind prenylated FMN. Glutamate 238 provides a ligand contact to Mn(2+). The active-site Proton donor is the aspartate 287.

The protein belongs to the UbiD family. In terms of assembly, homohexamer. The cofactor is prenylated FMN. Mn(2+) serves as cofactor.

It localises to the cell membrane. It catalyses the reaction a 4-hydroxy-3-(all-trans-polyprenyl)benzoate + H(+) = a 2-(all-trans-polyprenyl)phenol + CO2. It functions in the pathway cofactor biosynthesis; ubiquinone biosynthesis. Catalyzes the decarboxylation of 3-octaprenyl-4-hydroxy benzoate to 2-octaprenylphenol, an intermediate step in ubiquinone biosynthesis. This is 3-octaprenyl-4-hydroxybenzoate carboxy-lyase from Shewanella piezotolerans (strain WP3 / JCM 13877).